The chain runs to 289 residues: Alpha-soluble NSF attachment protein (289 aa).

The TPR repeat unit spans residues 112–145 (GKYYKEIAELYELEQNFEQAIIYFEKAADIYQSE).

It belongs to the SNAP family.

Its subcellular location is the membrane. Functionally, required for vesicular transport between the endoplasmic reticulum and the Golgi apparatus. The protein is Alpha-soluble NSF attachment protein of Vitis vinifera (Grape).